The following is a 245-amino-acid chain: Sec-independent protein translocase protein TatC (245 aa).

The next 6 helical transmembrane spans lie at 17–37 (FISVACIVVMFIVCFALRSYI), 73–93 (FFAAFIFSLPVIFWQFWKFVA), 107–127 (FVSFASIMFAFGACFCYFVVV), 159–179 (VVVAFGLAFEMPVIAFFFAKI), 191–207 (FRIAVLVIFVFSAFMTP), and 210–230 (VLSQFLMAGPLCGLYGLSILI).

This sequence belongs to the TatC family. As to quaternary structure, the Tat system comprises two distinct complexes: a TatABC complex, containing multiple copies of TatA, TatB and TatC subunits, and a separate TatA complex, containing only TatA subunits. Substrates initially bind to the TatABC complex, which probably triggers association of the separate TatA complex to form the active translocon.

It is found in the cell inner membrane. In terms of biological role, part of the twin-arginine translocation (Tat) system that transports large folded proteins containing a characteristic twin-arginine motif in their signal peptide across membranes. Together with TatB, TatC is part of a receptor directly interacting with Tat signal peptides. In Campylobacter jejuni subsp. jejuni serotype O:2 (strain ATCC 700819 / NCTC 11168), this protein is Sec-independent protein translocase protein TatC.